The sequence spans 471 residues: Pachytene checkpoint protein 2 homolog (471 aa).

213–220 (GPPGTGKT) serves as a coordination point for ATP.

This sequence belongs to the AAA ATPase family. PCH2 subfamily.

Plays a key role in chromosome recombination during meiosis. In Oryza sativa subsp. indica (Rice), this protein is Pachytene checkpoint protein 2 homolog.